Consider the following 444-residue polypeptide: MPFMFETILSRVKWTANTLVARLTTLYEYEYPRTAKEETGIDKEYHIKLWDEDIGAMLVSMMRLAGYSEQSQKTHRIFFKEQVARSLGLYPTTYPHQSAWESFMTDDHTPVEMSWSWSGNTPTPVVRYAAEPISWHAGTASDPLNSEATTECLASTAPLAPSLDLRWYRHFLKHLVADDSDGQHDTTDHLSQEFIAFDLDKDSMTVKYYFLPTLKSLACGKTNLELMEESILSLPEADEAVRSSLKVLTTYIRAYPQDEQPQAEIFAVDCVNPANSRLKIYVRSRKTTFDSMLEMMTLGGQTPDLTRDAIDSLRELWCACFALPNNPSVTSKPLRSKEHRTGGLLYYFELRPGAALPTSKVYLPVRHYGKTDDQIARGLSSYLYKRGQCLEGGLSYYEGVRRICKHRSLKQGLGFQTYITCAVKKGVVSVNAYFNPETCQYSRG.

Belongs to the tryptophan dimethylallyltransferase family. In terms of assembly, homodimer.

It carries out the reaction L-tyrosine + dimethylallyl diphosphate = 4-O-dimethylallyl-L-tyrosine + diphosphate. In terms of biological role, 4-O-dimethylallyl-L-tyrosine synthase; part of the gene cluster that mediates the biosynthesis of an unusual class of epipolythiodioxopiperazines (ETPs) lacking the reactive thiol group important for toxicity. Firstly, L-tyrosine is prenylated by tcpD, before undergoing condensation with L-glycine in a reaction catalyzed by the NRPS tcpP leading to the diketopiperazine (DKP) backbone. Afterwards the alpha-carbon of tyrosine is oxidized by the cytochrome P450 tcpC to form a hydroxyl group. However, in contrast other ETP biosynthesis pathways studied so far, tcpC is not able to bishydroxylate the DKP at both alpha-carbon positions, but hydroxylates the alpha-carbon of the tyrosine part and the nitrogen of the glycine part. The next steps involve an alpha,beta-elimination reaction catalyzed by tcpI, a methylation by the methyltransferase tcpN the action of the four enzyme cascade tcpG/K/J/I. Due to a dysfunctional cytochrome P450 monooxygenase tcpC, the pathway leads to the biosynthesis of probable non-toxic metabolites lacking the reactive thiol group. The polypeptide is 4-O-dimethylallyl-L-tyrosine synthase (Claviceps purpurea (strain 20.1) (Ergot fungus)).